Consider the following 289-residue polypeptide: MRSQGGSFAVALLLLLLLTAAATAADAEPDVESSVSTLPPGADAPRRMVKRAPTSSFIGMRGKKEDEKDQRAADWMGPDPLDYADMDEDSIYYENGKRLKKAPMSFVGMRGKKYIPISNRLSDVLHQIEEQRMRENLLEDLFERLAAGDDSVGDVGKRAPTGFTGMRGKRPMSGDDDDNDAMELLQKRAPVNSFLGVRGKKDVSHQHYKRAALSEAYDVRGKKERYADFNSKFVAVRGKKSEQEAGLDTGDGDGDQQYLVRPWLYLWADNKRAPSGFQGMRGKRPALAE.

An N-terminal signal peptide occupies residues 1–24 (MRSQGGSFAVALLLLLLLTAAATA). Residues 25 to 49 (ADAEPDVESSVSTLPPGADAPRRMV) constitute a propeptide that is removed on maturation. Residues 28–80 (EPDVESSVSTLPPGADAPRRMVKRAPTSSFIGMRGKKEDEKDQRAADWMGPDP) form a disordered region. Arg-61 is modified (arginine amide). Basic and acidic residues predominate over residues 62-72 (GKKEDEKDQRA). Residue Asn-95 is modified to Asparagine amide. The residue at position 110 (Arg-110) is an Arginine amide. The residue at position 155 (Val-155) is a Valine amide. The interval 156 to 175 (GKRAPTGFTGMRGKRPMSGD) is disordered. Arginine amide is present on residues Arg-167, Arg-198, Arg-237, and Arg-281. The propeptide occupies 285–289 (PALAE).

The protein belongs to the tachykinin family.

It localises to the secreted. In terms of biological role, tachykinins are active peptides which excite neurons, evoke behavioral responses, are potent vasodilators and secretagogues, and contract (directly or indirectly) many smooth muscles. Stimulates gut muscle contractions. The protein is Tachykinins of Drosophila pseudoobscura pseudoobscura (Fruit fly).